The chain runs to 399 residues: S-adenosylmethionine synthase (399 aa).

Residue His-17 coordinates ATP. Asp-19 provides a ligand contact to Mg(2+). Position 52 (Glu-52) interacts with K(+). Residues Glu-65 and Gln-109 each coordinate L-methionine. Residues 109 to 119 (QSADIAQGVDA) are flexible loop. Residues 177 to 179 (DSK), 243 to 244 (KF), Asp-252, 258 to 259 (RK), Ala-275, and Lys-279 contribute to the ATP site. Asp-252 contacts L-methionine. Lys-283 contacts L-methionine.

This sequence belongs to the AdoMet synthase family. As to quaternary structure, homotetramer; dimer of dimers. Mg(2+) is required as a cofactor. It depends on K(+) as a cofactor.

Its subcellular location is the cytoplasm. The enzyme catalyses L-methionine + ATP + H2O = S-adenosyl-L-methionine + phosphate + diphosphate. It participates in amino-acid biosynthesis; S-adenosyl-L-methionine biosynthesis; S-adenosyl-L-methionine from L-methionine: step 1/1. Its function is as follows. Catalyzes the formation of S-adenosylmethionine (AdoMet) from methionine and ATP. The overall synthetic reaction is composed of two sequential steps, AdoMet formation and the subsequent tripolyphosphate hydrolysis which occurs prior to release of AdoMet from the enzyme. This Bradyrhizobium sp. (strain ORS 278) protein is S-adenosylmethionine synthase.